Reading from the N-terminus, the 803-residue chain is MRLKDPFSLKTADMTKRSNKPKKPRDEDSSDEVGGLTCQHVSRAVDLSSVKKAVTGSLWSVCSDCLKERNVLEGETAGAHDILVCLKCGFQGCNQAEVQHSTKHQQAHHSDSHCITISLTTWKAWCFECKEELSTHCNKKALAQTLDFLQKQSAKATSGTSSKLIKLREEPAEYVDTQRGKSPVNSTLIPVKGINNLGNTCFFNAVMQNLSQTHMLNDLIQDVKEKGHKMKISPSTETNLGSLTVTLPSPEPLTSAMFLFLQSMKESGKGPVSPKILFNQLCQKAPRFKGYQQQDSQELLHYLLDSMRVEETKRIKAGILKAFNNPTEKTADEETKRQVKAYGKEGVKLNFVDRIFVGELTSTIMCEECEHISTVKEAFIDISLPIIEERISKPTNPARLGKSGREQDSLTSHDDSLAAHSQANRNSRRLSGQKLQSRHSSTSHDDRGPDTVSSRQEEDLCVAGRGLSSYRTDTMGSQSDCSEKESNLQDSSNDADSEASESEWSPRIPSVSSHSSTSDKTSITTTLSTTTHNPSLKSNPSSTPLPSIRPQQGGAVEQLVSAVSKLGLVHTSTDTLPISHSQEELSETRDRDRQHHQGAFQVLCHSYTPSSKECSVQSCLHQFTSIELLMGNNKLLCENCTDRRQRQMKRSDKKAEKVYTSARKQMLISALPPVVTLHLKRFHQAGMNLRKVNRHVDFPLLLDLAPFCSATCKNLGSGERVLYSLYGIVEHSGSMRGGHYAAYVKVRTPQRKPEQRRNQSGSREACSAPQGQWVYVSDTTVQTVPESRVLNSQAYLLFYEELL.

Residues 1–34 (MRLKDPFSLKTADMTKRSNKPKKPRDEDSSDEVG) are disordered. The UBP-type zinc-finger motif lies at 36–153 (LTCQHVSRAV…QTLDFLQKQS (118 aa)). 12 residues coordinate Zn(2+): cysteine 38, histidine 40, cysteine 62, cysteine 65, cysteine 85, cysteine 88, cysteine 93, histidine 100, histidine 104, histidine 113, cysteine 126, and cysteine 129. One can recognise a USP domain in the interval 192–802 (KGINNLGNTC…QAYLLFYEEL (611 aa)). The active-site Nucleophile is cysteine 201. Positions 394–554 (PTNPARLGKS…LPSIRPQQGG (161 aa)) are disordered. A compositionally biased stretch (basic and acidic residues) spans 403 to 417 (SGREQDSLTSHDDSL). Polar residues-rich tracts occupy residues 419-440 (AHSQ…SRHS) and 469-480 (SYRTDTMGSQSD). Over residues 502-531 (SEWSPRIPSVSSHSSTSDKTSITTTLSTTT) the composition is skewed to low complexity. Over residues 532–545 (HNPSLKSNPSSTPL) the composition is skewed to polar residues. Catalysis depends on histidine 739, which acts as the Proton acceptor.

This sequence belongs to the peptidase C19 family. Retina.

The protein resides in the photoreceptor inner segment. It localises to the cytoplasm. Its subcellular location is the nucleus. It carries out the reaction Thiol-dependent hydrolysis of ester, thioester, amide, peptide and isopeptide bonds formed by the C-terminal Gly of ubiquitin (a 76-residue protein attached to proteins as an intracellular targeting signal).. Its function is as follows. Catalyzes the deubiquitination of SPDL1. Plays a role in the repair of UV-induced DNA damage via deubiquitination of ERCC1, promoting its recruitment to DNA damage sites. May be involved in the maintenance of photoreceptor function. May play a role in normal retinal development. This Danio rerio (Zebrafish) protein is Ubiquitin carboxyl-terminal hydrolase 45.